The sequence spans 451 residues: Coproporphyrinogen III oxidase (451 aa).

Residues Gly10–Gly15, Asp36–Pro37, Gly58–Ala61, Val242, Trp393, and Ile429–Val431 contribute to the FAD site.

Belongs to the protoporphyrinogen/coproporphyrinogen oxidase family. Coproporphyrinogen III oxidase subfamily. FAD serves as cofactor.

The protein resides in the cytoplasm. The enzyme catalyses coproporphyrinogen III + 3 O2 = coproporphyrin III + 3 H2O2. Its pathway is porphyrin-containing compound metabolism; protoheme biosynthesis. Its function is as follows. Involved in coproporphyrin-dependent heme b biosynthesis. Catalyzes the oxidation of coproporphyrinogen III to coproporphyrin III. This Mycobacterium leprae (strain TN) protein is Coproporphyrinogen III oxidase.